Consider the following 414-residue polypeptide: Multifunctional CCA protein (414 aa).

Gly8 and Arg11 together coordinate ATP. Gly8 and Arg11 together coordinate CTP. Mg(2+) contacts are provided by Asp21 and Asp23. Residues Arg91, Arg137, and Arg140 each coordinate ATP. CTP contacts are provided by Arg91, Arg137, and Arg140. The HD domain maps to 228 to 329 (TGIHTLMTLA…LKLFDAVDVW (102 aa)).

The protein belongs to the tRNA nucleotidyltransferase/poly(A) polymerase family. Bacterial CCA-adding enzyme type 1 subfamily. In terms of assembly, monomer. Can also form homodimers and oligomers. Mg(2+) is required as a cofactor. Ni(2+) serves as cofactor.

It catalyses the reaction a tRNA precursor + 2 CTP + ATP = a tRNA with a 3' CCA end + 3 diphosphate. The enzyme catalyses a tRNA with a 3' CCA end + 2 CTP + ATP = a tRNA with a 3' CCACCA end + 3 diphosphate. In terms of biological role, catalyzes the addition and repair of the essential 3'-terminal CCA sequence in tRNAs without using a nucleic acid template. Adds these three nucleotides in the order of C, C, and A to the tRNA nucleotide-73, using CTP and ATP as substrates and producing inorganic pyrophosphate. tRNA 3'-terminal CCA addition is required both for tRNA processing and repair. Also involved in tRNA surveillance by mediating tandem CCA addition to generate a CCACCA at the 3' terminus of unstable tRNAs. While stable tRNAs receive only 3'-terminal CCA, unstable tRNAs are marked with CCACCA and rapidly degraded. The protein is Multifunctional CCA protein of Serratia proteamaculans (strain 568).